The following is a 72-amino-acid chain: Translation initiation factor IF-1 (72 aa).

Residues methionine 1–lysine 72 enclose the S1-like domain.

It belongs to the IF-1 family. As to quaternary structure, component of the 30S ribosomal translation pre-initiation complex which assembles on the 30S ribosome in the order IF-2 and IF-3, IF-1 and N-formylmethionyl-tRNA(fMet); mRNA recruitment can occur at any time during PIC assembly.

It localises to the cytoplasm. One of the essential components for the initiation of protein synthesis. Stabilizes the binding of IF-2 and IF-3 on the 30S subunit to which N-formylmethionyl-tRNA(fMet) subsequently binds. Helps modulate mRNA selection, yielding the 30S pre-initiation complex (PIC). Upon addition of the 50S ribosomal subunit IF-1, IF-2 and IF-3 are released leaving the mature 70S translation initiation complex. The protein is Translation initiation factor IF-1 of Ruthia magnifica subsp. Calyptogena magnifica.